The sequence spans 289 residues: Acetyl-coenzyme A carboxylase carboxyl transferase subunit beta (289 aa).

The CoA carboxyltransferase N-terminal domain maps to 28-289 (VMTKCPKCKK…QGGGMAVWQS (262 aa)). The Zn(2+) site is built by Cys32, Cys35, Cys51, and Cys54. A C4-type zinc finger spans residues 32 to 54 (CPKCKKIMYTKELLKNLKVCVNC).

Belongs to the AccD/PCCB family. In terms of assembly, acetyl-CoA carboxylase is a heterohexamer composed of biotin carboxyl carrier protein (AccB), biotin carboxylase (AccC) and two subunits each of ACCase subunit alpha (AccA) and ACCase subunit beta (AccD). It depends on Zn(2+) as a cofactor.

The protein resides in the cytoplasm. It carries out the reaction N(6)-carboxybiotinyl-L-lysyl-[protein] + acetyl-CoA = N(6)-biotinyl-L-lysyl-[protein] + malonyl-CoA. It functions in the pathway lipid metabolism; malonyl-CoA biosynthesis; malonyl-CoA from acetyl-CoA: step 1/1. Its function is as follows. Component of the acetyl coenzyme A carboxylase (ACC) complex. Biotin carboxylase (BC) catalyzes the carboxylation of biotin on its carrier protein (BCCP) and then the CO(2) group is transferred by the transcarboxylase to acetyl-CoA to form malonyl-CoA. The protein is Acetyl-coenzyme A carboxylase carboxyl transferase subunit beta of Bacillus mycoides (strain KBAB4) (Bacillus weihenstephanensis).